A 223-amino-acid chain; its full sequence is Cytidylate kinase (223 aa).

12–20 (GPSGVGKGT) is a binding site for ATP.

The protein belongs to the cytidylate kinase family. Type 1 subfamily.

The protein localises to the cytoplasm. The catalysed reaction is CMP + ATP = CDP + ADP. It carries out the reaction dCMP + ATP = dCDP + ADP. The sequence is that of Cytidylate kinase from Xylella fastidiosa (strain M12).